Reading from the N-terminus, the 326-residue chain is ATP synthase gamma chain (326 aa).

This sequence belongs to the ATPase gamma chain family. F-type ATPases have 2 components, CF(1) - the catalytic core - and CF(0) - the membrane proton channel. CF(1) has five subunits: alpha(3), beta(3), gamma(1), delta(1), epsilon(1). CF(0) has three main subunits: a, b and c.

Its subcellular location is the cell membrane. Produces ATP from ADP in the presence of a proton gradient across the membrane. The gamma chain is believed to be important in regulating ATPase activity and the flow of protons through the CF(0) complex. The polypeptide is ATP synthase gamma chain (Rhodococcus jostii (strain RHA1)).